A 533-amino-acid polypeptide reads, in one-letter code: Protein translocase subunit SecD (533 aa).

The next 6 helical transmembrane spans lie at 8–28 (ALLV…TFVS), 377–397 (IVGG…GGVV), 400–420 (LALA…GFTL), 422–442 (LPGI…NVLI), 469–489 (LTIL…LQFG), and 495–515 (GFAV…IFVT).

The protein belongs to the SecD/SecF family. SecD subfamily. As to quaternary structure, forms a complex with SecF. Part of the essential Sec protein translocation apparatus which comprises SecA, SecYEG and auxiliary proteins SecDF-YajC and YidC.

Its subcellular location is the cell inner membrane. Part of the Sec protein translocase complex. Interacts with the SecYEG preprotein conducting channel. SecDF uses the proton motive force (PMF) to complete protein translocation after the ATP-dependent function of SecA. The polypeptide is Protein translocase subunit SecD (Syntrophobacter fumaroxidans (strain DSM 10017 / MPOB)).